The following is a 1381-amino-acid chain: Major capsid protein (1381 aa).

Belongs to the herpesviridae major capsid protein family. In terms of assembly, homomultimer. Makes the hexons and eleven out of twelve pentons. Interacts with triplex proteins 1/TRX1 and 2/TRX2; adjacent capsomers are linked together in groups of three by triplexes, heterotrimeric complexes composed of one molecule of TRX1 and two molecules of TRX2. Interacts with scaffold protein; this interaction allows efficient MCP transport to the host nucleus. Interacts with capsid vertex component 2/CVC2. Interacts with the small capsomere-interacting protein/SCP.

Its subcellular location is the virion. The protein localises to the host nucleus. Its function is as follows. Self-assembles to form an icosahedral capsid with a T=16 symmetry, about 200 nm in diameter, and consisting of 150 hexons and 12 pentons (total of 162 capsomers). Hexons form the edges and faces of the capsid and are each composed of six MCP molecules. In contrast, one penton is found at each of the 12 vertices. Eleven of the pentons are MCP pentamers, while the last vertex is occupied by the portal complex. The capsid is surrounded by a layer of proteinaceous material designated the tegument which, in turn, is enclosed in an envelope of host cell-derived lipids containing virus-encoded glycoproteins. This Epstein-Barr virus (strain B95-8) (HHV-4) protein is Major capsid protein.